The following is a 296-amino-acid chain: Lipoyl synthase (296 aa).

The [4Fe-4S] cluster site is built by cysteine 37, cysteine 42, cysteine 48, cysteine 63, cysteine 67, cysteine 70, and serine 276. Positions 49 to 265 (WSKKHTTVMI…ERVAKTKGFL (217 aa)) constitute a Radical SAM core domain.

This sequence belongs to the radical SAM superfamily. Lipoyl synthase family. [4Fe-4S] cluster serves as cofactor.

Its subcellular location is the cytoplasm. The catalysed reaction is [[Fe-S] cluster scaffold protein carrying a second [4Fe-4S](2+) cluster] + N(6)-octanoyl-L-lysyl-[protein] + 2 oxidized [2Fe-2S]-[ferredoxin] + 2 S-adenosyl-L-methionine + 4 H(+) = [[Fe-S] cluster scaffold protein] + N(6)-[(R)-dihydrolipoyl]-L-lysyl-[protein] + 4 Fe(3+) + 2 hydrogen sulfide + 2 5'-deoxyadenosine + 2 L-methionine + 2 reduced [2Fe-2S]-[ferredoxin]. Its pathway is protein modification; protein lipoylation via endogenous pathway; protein N(6)-(lipoyl)lysine from octanoyl-[acyl-carrier-protein]: step 2/2. Catalyzes the radical-mediated insertion of two sulfur atoms into the C-6 and C-8 positions of the octanoyl moiety bound to the lipoyl domains of lipoate-dependent enzymes, thereby converting the octanoylated domains into lipoylated derivatives. The protein is Lipoyl synthase of Rickettsia peacockii (strain Rustic).